A 387-amino-acid polypeptide reads, in one-letter code: Succinate--CoA ligase [ADP-forming] subunit beta (387 aa).

Residues 9 to 244 enclose the ATP-grasp domain; the sequence is KALLQRYGVN…WSQDDAKEAE (236 aa). ATP contacts are provided by residues Lys-46, 53 to 55, Glu-99, Leu-102, and Glu-107; that span reads GRG. Mg(2+) contacts are provided by Asn-199 and Asp-213. Substrate is bound by residues Asn-264 and 321-323; that span reads GIM.

This sequence belongs to the succinate/malate CoA ligase beta subunit family. In terms of assembly, heterotetramer of two alpha and two beta subunits. It depends on Mg(2+) as a cofactor.

It carries out the reaction succinate + ATP + CoA = succinyl-CoA + ADP + phosphate. The enzyme catalyses GTP + succinate + CoA = succinyl-CoA + GDP + phosphate. The protein operates within carbohydrate metabolism; tricarboxylic acid cycle; succinate from succinyl-CoA (ligase route): step 1/1. In terms of biological role, succinyl-CoA synthetase functions in the citric acid cycle (TCA), coupling the hydrolysis of succinyl-CoA to the synthesis of either ATP or GTP and thus represents the only step of substrate-level phosphorylation in the TCA. The beta subunit provides nucleotide specificity of the enzyme and binds the substrate succinate, while the binding sites for coenzyme A and phosphate are found in the alpha subunit. The polypeptide is Succinate--CoA ligase [ADP-forming] subunit beta (Methylobacillus flagellatus (strain ATCC 51484 / DSM 6875 / VKM B-1610 / KT)).